The sequence spans 420 residues: MVHQPPAGTRDLLPQDVTQKRWIESRLQQVFQQWGYQRIITPTLERLDTLVAGGAVQRSAVIQVQSDEESGLGLRPELTASIARAAVTRLAGSSLPLRLYYLANVFRPAFQGDRLQQRELFQAGVELLGVGGTLADAEVLHVLADALAELGFGQPPLGSWHLVVGEASLTRSLLQPFPKDLREKVRQAIAQLDRVTLESLPLESQLRDRALLLHDLRGQPDQVFAKLQQLTLTPLEQTLRDRLAQLVELYNASAGPQDSPLLLDLSLLRSFDYYTGIVFEVVYETPTGPWVLAQGGRYDRLLDVYDPQAAGQPGIGFSCNIENLQQVLLAANRLPHRPPAIDQLVIPVDSEAYGAALAEAQRLQRQDQLRVELYLDSDRRPEVVQAFAQRRRIGRIVWVSSGSAPQSEAVAVAERATTTC.

The protein belongs to the class-II aminoacyl-tRNA synthetase family. HisZ subfamily. In terms of assembly, heteromultimer composed of HisG and HisZ subunits.

The protein localises to the cytoplasm. It functions in the pathway amino-acid biosynthesis; L-histidine biosynthesis; L-histidine from 5-phospho-alpha-D-ribose 1-diphosphate: step 1/9. Required for the first step of histidine biosynthesis. May allow the feedback regulation of ATP phosphoribosyltransferase activity by histidine. This Synechococcus sp. (strain ATCC 27144 / PCC 6301 / SAUG 1402/1) (Anacystis nidulans) protein is ATP phosphoribosyltransferase regulatory subunit.